The sequence spans 433 residues: 3-phosphoshikimate 1-carboxyvinyltransferase (433 aa).

The 3-phosphoshikimate site is built by lysine 22, serine 23, and arginine 27. Lysine 22 provides a ligand contact to phosphoenolpyruvate. Phosphoenolpyruvate contacts are provided by glycine 94 and arginine 123. The 3-phosphoshikimate site is built by serine 168, glutamine 170, aspartate 319, and lysine 346. Glutamine 170 serves as a coordination point for phosphoenolpyruvate. The active-site Proton acceptor is aspartate 319. Phosphoenolpyruvate contacts are provided by arginine 350 and arginine 392.

The protein belongs to the EPSP synthase family. In terms of assembly, monomer.

The protein localises to the cytoplasm. It catalyses the reaction 3-phosphoshikimate + phosphoenolpyruvate = 5-O-(1-carboxyvinyl)-3-phosphoshikimate + phosphate. The protein operates within metabolic intermediate biosynthesis; chorismate biosynthesis; chorismate from D-erythrose 4-phosphate and phosphoenolpyruvate: step 6/7. Its function is as follows. Catalyzes the transfer of the enolpyruvyl moiety of phosphoenolpyruvate (PEP) to the 5-hydroxyl of shikimate-3-phosphate (S3P) to produce enolpyruvyl shikimate-3-phosphate and inorganic phosphate. The protein is 3-phosphoshikimate 1-carboxyvinyltransferase of Roseiflexus sp. (strain RS-1).